A 160-amino-acid polypeptide reads, in one-letter code: MSTLKKPDLSDPKLRAKLAKGMGHNYYGEPAWPNDLLYIFPVVILGTIACVVGLAVLDPAMLGDKANPFATPLEILPEWYLYPVFQILRVVPNKLLGIALQTLIPLGLMILPFIENVNKFSNPFRRPVAMSVFLFGTFLTIYLGIGACLPIDKSLTLGLF.

3 helical membrane passes run 36-56 (LLYI…GLAV), 95-115 (LLGI…PFIE), and 131-151 (SVFL…CLPI).

Belongs to the cytochrome b family. PetD subfamily. As to quaternary structure, the 4 large subunits of the cytochrome b6-f complex are cytochrome b6, subunit IV (17 kDa polypeptide, PetD), cytochrome f and the Rieske protein, while the 4 small subunits are PetG, PetL, PetM and PetN. The complex functions as a dimer.

The protein localises to the cellular thylakoid membrane. Functionally, component of the cytochrome b6-f complex, which mediates electron transfer between photosystem II (PSII) and photosystem I (PSI), cyclic electron flow around PSI, and state transitions. The sequence is that of Cytochrome b6-f complex subunit 4 from Prochlorococcus marinus subsp. pastoris (strain CCMP1986 / NIES-2087 / MED4).